The following is a 264-amino-acid chain: Low molecular mass lipoprotein PBMHP-12 (264 aa).

The N-terminal stretch at 1-16 is a signal peptide; it reads MKLLVVFAMCVPAASA.

Belongs to the 30 kDa lipoprotein family.

The protein localises to the secreted. This is Low molecular mass lipoprotein PBMHP-12 from Bombyx mori (Silk moth).